The primary structure comprises 373 residues: tRNA (guanine(26)-N(2))-dimethyltransferase (373 aa).

In terms of domain architecture, Trm1 methyltransferase spans 2 to 365 (KIISEGETKL…AELSDLVVLI (364 aa)). Residues R35, R66, D86, D113, and A114 each contribute to the S-adenosyl-L-methionine site.

This sequence belongs to the class I-like SAM-binding methyltransferase superfamily. Trm1 family.

It catalyses the reaction guanosine(26) in tRNA + 2 S-adenosyl-L-methionine = N(2)-dimethylguanosine(26) in tRNA + 2 S-adenosyl-L-homocysteine + 2 H(+). Its function is as follows. Dimethylates a single guanine residue at position 26 of a number of tRNAs using S-adenosyl-L-methionine as donor of the methyl groups. This Methanococcus maripaludis (strain C5 / ATCC BAA-1333) protein is tRNA (guanine(26)-N(2))-dimethyltransferase.